Here is a 295-residue protein sequence, read N- to C-terminus: Signal-transducing adaptor protein 1 (295 aa).

A PH domain is found at 25–121; that stretch reads PLYFEGFLLI…WRGFILTVTE (97 aa). Phosphotyrosine is present on Tyr-168. The SH2 domain occupies 177–280; the sequence is ACFYTVSRKE…TDENTGQEPS (104 aa). Residues 270-295 are disordered; the sequence is STDENTGQEPSMEGRSEKLKKNPHIA.

In terms of assembly, interacts with KIT and CSF1R. Interacts with URI1; the interaction is phosphorylation-dependent and occurs in a growth-dependent manner. Phosphorylated on tyrosine by TEC. Phosphorylated on tyrosine by KIT.

Its subcellular location is the nucleus. It localises to the cytoplasm. The protein resides in the mitochondrion. In BCR signaling, appears to function as a docking protein acting downstream of TEC and participates in a positive feedback loop by increasing the activity of TEC. The sequence is that of Signal-transducing adaptor protein 1 (STAP1) from Homo sapiens (Human).